The primary structure comprises 77 residues: Translation initiation factor IF-1, chloroplastic (77 aa).

The S1-like domain occupies 1–71 (MKEQKLIHEG…TRGRIIYRLR (71 aa)).

Belongs to the IF-1 family. In terms of assembly, component of the 30S ribosomal translation pre-initiation complex which assembles on the 30S ribosome in the order IF-2 and IF-3, IF-1 and N-formylmethionyl-tRNA(fMet); mRNA recruitment can occur at any time during PIC assembly.

The protein resides in the plastid. The protein localises to the chloroplast. One of the essential components for the initiation of protein synthesis. Stabilizes the binding of IF-2 and IF-3 on the 30S subunit to which N-formylmethionyl-tRNA(fMet) subsequently binds. Helps modulate mRNA selection, yielding the 30S pre-initiation complex (PIC). Upon addition of the 50S ribosomal subunit IF-1, IF-2 and IF-3 are released leaving the mature 70S translation initiation complex. The protein is Translation initiation factor IF-1, chloroplastic of Phalaenopsis aphrodite subsp. formosana (Moth orchid).